The following is a 371-amino-acid chain: Peptide chain release factor 2 (371 aa).

Gln253 bears the N5-methylglutamine mark.

Belongs to the prokaryotic/mitochondrial release factor family. In terms of processing, methylated by PrmC. Methylation increases the termination efficiency of RF2.

It is found in the cytoplasm. In terms of biological role, peptide chain release factor 2 directs the termination of translation in response to the peptide chain termination codons UGA and UAA. The chain is Peptide chain release factor 2 (prfB) from Mycobacterium bovis (strain ATCC BAA-935 / AF2122/97).